The sequence spans 477 residues: 3-sulfolactaldehyde dehydrogenase (477 aa).

232–233 (GS) provides a ligand contact to NAD(+). The active-site Proton acceptor is E252. L253 provides a ligand contact to NAD(+). C286 acts as the Nucleophile in catalysis. E380 is a binding site for NAD(+).

This sequence belongs to the aldehyde dehydrogenase family.

The catalysed reaction is (2S)-3-sulfolactaldehyde + NAD(+) + H2O = (2S)-3-sulfolactate + NADH + 2 H(+). Its function is as follows. Part of the sulfo-TAL (or sulfo-SFT) pathway, a D-sulfoquinovose degradation pathway that produces sulfolactate (SL). Catalyzes the oxidation of 3-sulfolactaldehyde (SLA) to sulfolactate (SL). This Priestia aryabhattai (Bacillus aryabhattai) protein is 3-sulfolactaldehyde dehydrogenase.